The following is a 430-amino-acid chain: MKQAFRVALSVLMLFVAVAHAEVRIEITQGVNTARPIGVVPFKWDGPGAAPEDIGGIVAADLRNSGKFNPIDRARLPQQPTSVAEVQPAAWTALGIDAVVVGQVQPGADGSYTVSYQLVDTSGNPGAVLAQNQFKVTKQWLRYAAHSASDESFEKLTAIKGAFRTRIAYVVQTNGGQFPYELRVSDYDGYNQFVVHRSPQPLMSPAWSPDGSKVAYVTFESGKSALVIQTLANGAIRQVASFPRHNGAPSFSPDGSKLAFALSKTGSLNIYVMDIGSGQISQITDGRYNSTEPTWFPDSQSLAYTSDQAGRPQIYKIGVNGGTAQRITWEGAQNQDADVSSDGKSMVMISTNSGAQHVARQDLVTGAVQKLTDTFLDETPSLAPNGTMVIYSSTQGMGSVLQLVSTDGRFKARLPATDGQVKFPAWSPYL.

Residues 1–21 form the signal peptide; the sequence is MKQAFRVALSVLMLFVAVAHA.

The protein belongs to the TolB family. The Tol-Pal system is composed of five core proteins: the inner membrane proteins TolA, TolQ and TolR, the periplasmic protein TolB and the outer membrane protein Pal. They form a network linking the inner and outer membranes and the peptidoglycan layer.

It localises to the periplasm. Functionally, part of the Tol-Pal system, which plays a role in outer membrane invagination during cell division and is important for maintaining outer membrane integrity. TolB occupies a key intermediary position in the Tol-Pal system because it communicates directly with both membrane-embedded components, Pal in the outer membrane and TolA in the inner membrane. This Erwinia tasmaniensis (strain DSM 17950 / CFBP 7177 / CIP 109463 / NCPPB 4357 / Et1/99) protein is Tol-Pal system protein TolB.